A 414-amino-acid chain; its full sequence is Isocitrate dehydrogenase [NADP] cytoplasmic (414 aa).

Position 2 is an N-acetylserine (serine 2). Tyrosine 42 bears the Phosphotyrosine mark. Residue 75–77 (TIT) participates in NADP(+) binding. Position 77 (threonine 77) interacts with substrate. N6-acetyllysine is present on lysine 81. NADP(+) is bound at residue arginine 82. Substrate contacts are provided by residues 94–100 (SPNGTIR) and arginine 109. Position 126 is an N6-succinyllysine (lysine 126). The substrate site is built by arginine 132 and lysine 212. An N6-acetyllysine mark is found at lysine 224, lysine 233, and lysine 243. Mn(2+) is bound at residue aspartate 252. Residue lysine 260 coordinates NADP(+). 2 residues coordinate Mn(2+): aspartate 275 and aspartate 279. 310–315 (GTVTRH) provides a ligand contact to NADP(+). Lysine 321 carries the post-translational modification N6-acetyllysine. Asparagine 328 contributes to the NADP(+) binding site. A Phosphoserine modification is found at serine 389. At lysine 400 the chain carries N6-succinyllysine.

The protein belongs to the isocitrate and isopropylmalate dehydrogenases family. Homodimer. Mg(2+) serves as cofactor. Mn(2+) is required as a cofactor. Acetylation at Lys-374 dramatically reduces catalytic activity.

The protein resides in the cytoplasm. It is found in the cytosol. The enzyme catalyses D-threo-isocitrate + NADP(+) = 2-oxoglutarate + CO2 + NADPH. Catalyzes the NADP(+)-dependent oxidative decarboxylation of isocitrate (D-threo-isocitrate) to 2-ketoglutarate (2-oxoglutarate), which is required by other enzymes such as the phytanoyl-CoA dioxygenase. Plays a critical role in the generation of NADPH, an important cofactor in many biosynthesis pathways. May act as a corneal epithelial crystallin and may be involved in maintaining corneal epithelial transparency. The protein is Isocitrate dehydrogenase [NADP] cytoplasmic (IDH1) of Microtus mexicanus (Mexican vole).